Consider the following 521-residue polypeptide: Cytochrome P450 1A1 (521 aa).

Substrate is bound at residue Phe229. Cys463 lines the heme pocket.

It belongs to the cytochrome P450 family. Requires heme as cofactor.

Its subcellular location is the endoplasmic reticulum membrane. It is found in the microsome membrane. The enzyme catalyses an organic molecule + reduced [NADPH--hemoprotein reductase] + O2 = an alcohol + oxidized [NADPH--hemoprotein reductase] + H2O + H(+). Cytochromes P450 are a group of heme-thiolate monooxygenases. They oxidize a variety of structurally unrelated compounds, including steroids, fatty acids, and xenobiotics. The chain is Cytochrome P450 1A1 (cyp1a1) from Chelon auratus (Golden grey mullet).